A 1404-amino-acid chain; its full sequence is DNA (cytosine-5)-methyltransferase 3 (1404 aa).

Residues 1-10 (MKTKAGKQKK) show a composition bias toward basic residues. The interval 1-35 (MKTKAGKQKKRSVDSDDDVSRERRPKRATSGTNFK) is disordered. Over residues 11–22 (RSVDSDDDVSRE) the composition is skewed to basic and acidic residues. Residue K486 forms a Glycyl lysine isopeptide (Lys-Gly) (interchain with G-Cter in ubiquitin) linkage. 2 consecutive BAH domains span residues 614–748 (RKMD…FSLP) and 788–929 (IKYS…KKLP). Residues 969 to 1402 (LATLDIFAGC…RKLKEALHLR (434 aa)) form the SAM-dependent MTase C5-type domain. Residue C1085 is part of the active site.

It belongs to the class I-like SAM-binding methyltransferase superfamily. C5-methyltransferase family.

The protein localises to the nucleus. It carries out the reaction a 2'-deoxycytidine in DNA + S-adenosyl-L-methionine = a 5-methyl-2'-deoxycytidine in DNA + S-adenosyl-L-homocysteine + H(+). In terms of biological role, maintains chromatin CpG methylation that plays a role in genomic imprinting, regulation of embryogenesis and seed viability. Required for proper patterns of CG DNA methylation in dividing cells. Required during the endosperm development in seeds. The chain is DNA (cytosine-5)-methyltransferase 3 (MET3) from Arabidopsis thaliana (Mouse-ear cress).